We begin with the raw amino-acid sequence, 26 residues long: Cytochrome c oxidase subunit 2 (26 aa).

It belongs to the cytochrome c oxidase subunit 2 family. In terms of assembly, component of the cytochrome c oxidase (complex IV, CIV), a multisubunit enzyme composed of a catalytic core of 3 subunits and several supernumerary subunits. The complex exists as a monomer or a dimer and forms supercomplexes (SCs) in the inner mitochondrial membrane with ubiquinol-cytochrome c oxidoreductase (cytochrome b-c1 complex, complex III, CIII). Cu cation serves as cofactor.

The protein resides in the mitochondrion inner membrane. The catalysed reaction is 4 Fe(II)-[cytochrome c] + O2 + 8 H(+)(in) = 4 Fe(III)-[cytochrome c] + 2 H2O + 4 H(+)(out). Component of the cytochrome c oxidase, the last enzyme in the mitochondrial electron transport chain which drives oxidative phosphorylation. The respiratory chain contains 3 multisubunit complexes succinate dehydrogenase (complex II, CII), ubiquinol-cytochrome c oxidoreductase (cytochrome b-c1 complex, complex III, CIII) and cytochrome c oxidase (complex IV, CIV), that cooperate to transfer electrons derived from NADH and succinate to molecular oxygen, creating an electrochemical gradient over the inner membrane that drives transmembrane transport and the ATP synthase. Cytochrome c oxidase is the component of the respiratory chain that catalyzes the reduction of oxygen to water. Electrons originating from reduced cytochrome c in the intermembrane space (IMS) are transferred via the dinuclear copper A center (CU(A)) of subunit 2 and heme A of subunit 1 to the active site in subunit 1, a binuclear center (BNC) formed by heme A3 and copper B (CU(B)). The BNC reduces molecular oxygen to 2 water molecules using 4 electrons from cytochrome c in the IMS and 4 protons from the mitochondrial matrix. The polypeptide is Cytochrome c oxidase subunit 2 (COX2) (Solanum tuberosum (Potato)).